A 904-amino-acid chain; its full sequence is Pantothenate kinase 2 (904 aa).

Residues 1–56 (MAANNNSDPILDEGGGGGVKHEAVGEAGEGKGGGGGAAATQAPAAMLPRSGSRPQL) are disordered. A pantothenate kinase region spans residues 1–472 (MAANNNSDPI…LGDLNEKISW (472 aa)). The tract at residues 473 to 904 (MEKFVQKGTQ…DCICKFEPVP (432 aa)) is 4'-phosphopantetheine phosphatase. Positions 735, 736, and 771 each coordinate Mn(2+). A Subfamily II EGMGR motif motif is present at residues 855–859 (EGMGR).

In the N-terminal section; belongs to the type II pantothenate kinase family. The protein in the C-terminal section; belongs to the damage-control phosphatase family. Phosphopantetheine phosphatase II subfamily. Requires Mn(2+) as cofactor. Ni(2+) serves as cofactor.

The catalysed reaction is (R)-pantothenate + ATP = (R)-4'-phosphopantothenate + ADP + H(+). It carries out the reaction (R)-4'-phosphopantothenate + H2O = (R)-pantothenate + phosphate. It catalyses the reaction (R)-4'-phosphopantetheine + H2O = (R)-pantetheine + phosphate. The enzyme catalyses (R)-4'-phosphopantetheine sulfonate + H2O = (R)-pantetheine sulfonate + phosphate. The protein operates within cofactor biosynthesis; coenzyme A biosynthesis; CoA from (R)-pantothenate: step 1/5. Functionally, catalyzes the phosphorylation of pantothenate the first step in CoA biosynthesis. May play a role in the physiological regulation of the intracellular CoA concentration. Functionally redudant with PANK1. The phosphatase activity shows preference for normal or oxidatively damaged intermediates of 4'-phosphopantetheine, which provides strong indirect evidence that the phosphatase activity pre-empts damage in the CoA pathway. Hydrolyzing excess 4'-phosphopantetheine could constitute a directed overflow mechanism to prevent its oxidation to the S-sulfonate, sulfonate, or other forms. Hydrolyzing 4'-phosphopantetheine sulfonate or S-sulfonate would forestall their conversion to inactive forms of CoA and acyl carrier protein. In Oryza sativa subsp. japonica (Rice), this protein is Pantothenate kinase 2.